Reading from the N-terminus, the 348-residue chain is Dihydroorotase (348 aa).

Zn(2+) contacts are provided by H17 and H19. Residues 19–21 (HLR) and N45 each bind substrate. Residues K103, H140, and H178 each contribute to the Zn(2+) site. An N6-carboxylysine modification is found at K103. H140 provides a ligand contact to substrate. L223 contacts substrate. Residue D251 coordinates Zn(2+). D251 is an active-site residue. Positions 255 and 267 each coordinate substrate.

Belongs to the metallo-dependent hydrolases superfamily. DHOase family. Class II DHOase subfamily. Homodimer. Requires Zn(2+) as cofactor.

The enzyme catalyses (S)-dihydroorotate + H2O = N-carbamoyl-L-aspartate + H(+). Its pathway is pyrimidine metabolism; UMP biosynthesis via de novo pathway; (S)-dihydroorotate from bicarbonate: step 3/3. Catalyzes the reversible cyclization of carbamoyl aspartate to dihydroorotate. In Enterobacter sp. (strain 638), this protein is Dihydroorotase.